A 308-amino-acid chain; its full sequence is MFDPETLRTFIAVAETGSFSKAAERLCKTTATISYRIKLLEENTGVALFFRTTRSVTLTAAGEHLLCQARDWLGWLESMPSELQQVNDGVERQVNIVINNLLYNPQAVARLLAWLNERYPFTQFHISRQIYMGVWDSLLYEGFSLAIGVTGTEALANTFSLDPLGSVQWRFVMAADHPLANVEEPLTEAQLRRFPAVNIEDSARTLTKRVAWRLPGQKEIIVPDMETKIAAHLAGVGIGFLPKSLCQSMLDNQQLVSRVIPTMRPPSPLSLAWRKFGSGKAVEDIVTLFTQRRPEISGFLEIFGNPRS.

In terms of domain architecture, HTH lysR-type spans 2-59 (FDPETLRTFIAVAETGSFSKAAERLCKTTATISYRIKLLEENTGVALFFRTTRSVTLT). Residues 19–38 (FSKAAERLCKTTATISYRIK) constitute a DNA-binding region (H-T-H motif).

Belongs to the LysR transcriptional regulatory family.

Positive regulator essential for the expression of allD operon. Binds to the allD promoter. This chain is HTH-type transcriptional activator AllS (allS), found in Escherichia coli O1:K1 / APEC.